The sequence spans 536 residues: REST corepressor 2 (536 aa).

Residues 1-44 are disordered; sequence MERSGSGVLSRSRAKTVTNGNSQHSEEESSDEEHPNDSMIRVGG. A compositionally biased stretch (basic and acidic residues) spans 24–36; it reads HSEEESSDEEHPN. Positions 38 to 123 constitute an ELM2 domain; it reads SMIRVGGDYQ…KSLADLANFT (86 aa). One can recognise an SANT 1 domain in the interval 124–175; the sequence is PFPDEWTVEDKVLFEQAFSFHGKSFHRIQQMLPDKMITSLVKYYYSWKKTRT. A disordered region spans residues 179-264; sequence VMDRQARKLL…RARRRPPKGM (86 aa). A compositionally biased stretch (acidic residues) spans 197–211; sequence NDEIEEGDPGSDSDF. A compositionally biased stretch (basic residues) spans 249–262; that stretch reads YRHHPLRARRRPPK. Positions 283 to 315 form a coiled coil; the sequence is VTIRQLDTQLVSLKRQVQKIKQTNSVLRNNLGD. The SANT 2 domain occupies 328–379; the sequence is KINSRWTTEEQLLAVQAVRRYGKDFAAIADVIGNKTVAQVSSFFVSYRRRFN. The disordered stretch occupies residues 389–536; sequence AEQEVQGSSG…GLKVESPQSH (148 aa). Polar residues predominate over residues 391-406; it reads QEVQGSSGRTVNTELN. Low complexity predominate over residues 422–449; it reads SPPHSDSPLPSSEGSASGNHSSAQSSPP. The segment covering 450-476 has biased composition (pro residues); it reads LTQPPPLLRPAPPSAPPSLLRQPPPLQ.

This sequence belongs to the CoREST family.

The protein localises to the nucleus. Functionally, may act as a component of a corepressor complex that represses transcription. In Danio rerio (Zebrafish), this protein is REST corepressor 2 (rcor2).